A 237-amino-acid chain; its full sequence is Phosphoribosylaminoimidazole-succinocarboxamide synthase (237 aa).

Belongs to the SAICAR synthetase family.

The catalysed reaction is 5-amino-1-(5-phospho-D-ribosyl)imidazole-4-carboxylate + L-aspartate + ATP = (2S)-2-[5-amino-1-(5-phospho-beta-D-ribosyl)imidazole-4-carboxamido]succinate + ADP + phosphate + 2 H(+). The protein operates within purine metabolism; IMP biosynthesis via de novo pathway; 5-amino-1-(5-phospho-D-ribosyl)imidazole-4-carboxamide from 5-amino-1-(5-phospho-D-ribosyl)imidazole-4-carboxylate: step 1/2. This Photorhabdus laumondii subsp. laumondii (strain DSM 15139 / CIP 105565 / TT01) (Photorhabdus luminescens subsp. laumondii) protein is Phosphoribosylaminoimidazole-succinocarboxamide synthase.